The sequence spans 335 residues: Holliday junction branch migration complex subunit RuvB (335 aa).

The interval alanine 4–tyrosine 184 is large ATPase domain (RuvB-L). ATP-binding positions include isoleucine 23, arginine 24, glycine 65, lysine 68, threonine 69, threonine 70, glutamate 131–tyrosine 133, arginine 174, tyrosine 184, and arginine 221. Residue threonine 69 participates in Mg(2+) binding. Residues serine 185–aspartate 255 are small ATPAse domain (RuvB-S). Residues lysine 258–aspartate 335 are head domain (RuvB-H). DNA is bound by residues arginine 313 and arginine 318.

Belongs to the RuvB family. In terms of assembly, homohexamer. Forms an RuvA(8)-RuvB(12)-Holliday junction (HJ) complex. HJ DNA is sandwiched between 2 RuvA tetramers; dsDNA enters through RuvA and exits via RuvB. An RuvB hexamer assembles on each DNA strand where it exits the tetramer. Each RuvB hexamer is contacted by two RuvA subunits (via domain III) on 2 adjacent RuvB subunits; this complex drives branch migration. In the full resolvosome a probable DNA-RuvA(4)-RuvB(12)-RuvC(2) complex forms which resolves the HJ.

Its subcellular location is the cytoplasm. The catalysed reaction is ATP + H2O = ADP + phosphate + H(+). The RuvA-RuvB-RuvC complex processes Holliday junction (HJ) DNA during genetic recombination and DNA repair, while the RuvA-RuvB complex plays an important role in the rescue of blocked DNA replication forks via replication fork reversal (RFR). RuvA specifically binds to HJ cruciform DNA, conferring on it an open structure. The RuvB hexamer acts as an ATP-dependent pump, pulling dsDNA into and through the RuvAB complex. RuvB forms 2 homohexamers on either side of HJ DNA bound by 1 or 2 RuvA tetramers; 4 subunits per hexamer contact DNA at a time. Coordinated motions by a converter formed by DNA-disengaged RuvB subunits stimulates ATP hydrolysis and nucleotide exchange. Immobilization of the converter enables RuvB to convert the ATP-contained energy into a lever motion, pulling 2 nucleotides of DNA out of the RuvA tetramer per ATP hydrolyzed, thus driving DNA branch migration. The RuvB motors rotate together with the DNA substrate, which together with the progressing nucleotide cycle form the mechanistic basis for DNA recombination by continuous HJ branch migration. Branch migration allows RuvC to scan DNA until it finds its consensus sequence, where it cleaves and resolves cruciform DNA. This chain is Holliday junction branch migration complex subunit RuvB, found in Pseudoalteromonas translucida (strain TAC 125).